A 1112-amino-acid polypeptide reads, in one-letter code: Carbamoyl phosphate synthase large chain (1112 aa).

The carboxyphosphate synthetic domain stretch occupies residues 1 to 407; it reads MPRRTDLRHV…ALGKVMRSLE (407 aa). ATP contacts are provided by Arg-134, Arg-174, Gly-180, Gly-181, Glu-213, Ile-215, Glu-220, Gly-246, Val-247, His-248, Gln-290, and Glu-304. The 196-residue stretch at 138 to 333 folds into the ATP-grasp 1 domain; the sequence is KDIVTKVGGE…IAKIAAKLAI (196 aa). Mg(2+)-binding residues include Gln-290, Glu-304, and Asn-306. The Mn(2+) site is built by Gln-290, Glu-304, and Asn-306. The tract at residues 408–559 is oligomerization domain; that stretch reads TGRAGFWTAP…ELDPAAESEV (152 aa). The tract at residues 560–965 is carbamoyl phosphate synthetic domain; that stretch reads APQAERPKVL…AFAKSQTAAY (406 aa). Residues 693-884 enclose the ATP-grasp 2 domain; it reads GEVLRTAGLP…LAKACARIML (192 aa). ATP is bound by residues Arg-729, Arg-768, Leu-770, Glu-775, Gly-800, Ile-801, His-802, Ser-803, Gln-843, and Glu-855. 3 residues coordinate Mg(2+): Gln-843, Glu-855, and Asn-857. Mn(2+) is bound by residues Gln-843, Glu-855, and Asn-857. Residues 966 to 1112 form the MGS-like domain; the sequence is GSLPSEGTVF…LQELHSELGN (147 aa). The allosteric domain stretch occupies residues 966 to 1112; it reads GSLPSEGTVF…LQELHSELGN (147 aa).

This sequence belongs to the CarB family. Composed of two chains; the small (or glutamine) chain promotes the hydrolysis of glutamine to ammonia, which is used by the large (or ammonia) chain to synthesize carbamoyl phosphate. Tetramer of heterodimers (alpha,beta)4. Requires Mg(2+) as cofactor. The cofactor is Mn(2+).

The catalysed reaction is hydrogencarbonate + L-glutamine + 2 ATP + H2O = carbamoyl phosphate + L-glutamate + 2 ADP + phosphate + 2 H(+). It catalyses the reaction hydrogencarbonate + NH4(+) + 2 ATP = carbamoyl phosphate + 2 ADP + phosphate + 2 H(+). It participates in amino-acid biosynthesis; L-arginine biosynthesis; carbamoyl phosphate from bicarbonate: step 1/1. Its pathway is pyrimidine metabolism; UMP biosynthesis via de novo pathway; (S)-dihydroorotate from bicarbonate: step 1/3. In terms of biological role, large subunit of the glutamine-dependent carbamoyl phosphate synthetase (CPSase). CPSase catalyzes the formation of carbamoyl phosphate from the ammonia moiety of glutamine, carbonate, and phosphate donated by ATP, constituting the first step of 2 biosynthetic pathways, one leading to arginine and/or urea and the other to pyrimidine nucleotides. The large subunit (synthetase) binds the substrates ammonia (free or transferred from glutamine from the small subunit), hydrogencarbonate and ATP and carries out an ATP-coupled ligase reaction, activating hydrogencarbonate by forming carboxy phosphate which reacts with ammonia to form carbamoyl phosphate. The sequence is that of Carbamoyl phosphate synthase large chain from Mycobacterium sp. (strain JLS).